Consider the following 102-residue polypeptide: MTENIDTANIDAIKNKTLKRTANRANKEVFFRRRKGCPLSAPDGTAPIITYKDPDLLSKFISECGRVLPARVTNVCRSKQRELTKAIKIARELALLPFVYHQ.

This sequence belongs to the bacterial ribosomal protein bS18 family. Part of the 30S ribosomal subunit. Forms a tight heterodimer with protein bS6.

In terms of biological role, binds as a heterodimer with protein bS6 to the central domain of the 16S rRNA, where it helps stabilize the platform of the 30S subunit. The protein is Small ribosomal subunit protein bS18 of Orientia tsutsugamushi (strain Boryong) (Rickettsia tsutsugamushi).